We begin with the raw amino-acid sequence, 184 residues long: ATP-dependent protease subunit HslV (184 aa).

Threonine 2 is an active-site residue. 3 residues coordinate Na(+): glycine 157, cysteine 160, and threonine 163.

Belongs to the peptidase T1B family. HslV subfamily. In terms of assembly, a double ring-shaped homohexamer of HslV is capped on each side by a ring-shaped HslU homohexamer. The assembly of the HslU/HslV complex is dependent on binding of ATP.

The protein localises to the cytoplasm. It catalyses the reaction ATP-dependent cleavage of peptide bonds with broad specificity.. Its activity is regulated as follows. Allosterically activated by HslU binding. In terms of biological role, protease subunit of a proteasome-like degradation complex believed to be a general protein degrading machinery. The sequence is that of ATP-dependent protease subunit HslV from Vibrio vulnificus (strain CMCP6).